A 94-amino-acid chain; its full sequence is Venom protein 59.1 (94 aa).

The signal sequence occupies residues M1 to A22. Disulfide bonds link C19/C47, C26/C49, C32/C50, C38/C53, C61/C76, and C70/C91. Positions E23–A94 constitute an IGFBP N-terminal domain.

In terms of tissue distribution, expressed by the venom gland.

The protein localises to the secreted. The polypeptide is Venom protein 59.1 (Lychas mucronatus (Chinese swimming scorpion)).